We begin with the raw amino-acid sequence, 172 residues long: Translation initiation factor IF-3 (172 aa).

It belongs to the IF-3 family. Monomer.

It is found in the cytoplasm. Functionally, IF-3 binds to the 30S ribosomal subunit and shifts the equilibrium between 70S ribosomes and their 50S and 30S subunits in favor of the free subunits, thus enhancing the availability of 30S subunits on which protein synthesis initiation begins. The chain is Translation initiation factor IF-3 from Campylobacter jejuni subsp. jejuni serotype O:6 (strain 81116 / NCTC 11828).